The chain runs to 202 residues: Dephospho-CoA kinase (202 aa).

The region spanning 6–202 (KVSITGDLSS…EYFYALKGAL (197 aa)) is the DPCK domain. Residue 14 to 19 (SSGKTE) participates in ATP binding.

The protein belongs to the CoaE family.

It is found in the cytoplasm. It catalyses the reaction 3'-dephospho-CoA + ATP = ADP + CoA + H(+). The protein operates within cofactor biosynthesis; coenzyme A biosynthesis; CoA from (R)-pantothenate: step 5/5. Functionally, catalyzes the phosphorylation of the 3'-hydroxyl group of dephosphocoenzyme A to form coenzyme A. In Chlamydia pneumoniae (Chlamydophila pneumoniae), this protein is Dephospho-CoA kinase.